Consider the following 208-residue polypeptide: EF-hand protein 5 variant 2 (208 aa).

A disordered region spans residues Met1–Ala35. EF-hand domains lie at Met64–Glu98, Glu99–Asp134, Thr135–Arg170, and Ser171–Asn206. Positions 118, 123, 148, 152, and 154 each coordinate Ca(2+).

The chain is EF-hand protein 5 variant 2 from Trypanosoma cruzi.